Consider the following 141-residue polypeptide: Large ribosomal subunit protein uL11 (141 aa).

It belongs to the universal ribosomal protein uL11 family. In terms of assembly, part of the ribosomal stalk of the 50S ribosomal subunit. Interacts with L10 and the large rRNA to form the base of the stalk. L10 forms an elongated spine to which L12 dimers bind in a sequential fashion forming a multimeric L10(L12)X complex. One or more lysine residues are methylated.

In terms of biological role, forms part of the ribosomal stalk which helps the ribosome interact with GTP-bound translation factors. The protein is Large ribosomal subunit protein uL11 of Herpetosiphon aurantiacus (strain ATCC 23779 / DSM 785 / 114-95).